A 200-amino-acid chain; its full sequence is uncharacterized protein (200 aa).

The interval 149-200 (APDPGGSVATEEVLRSDDRDSHTQDSASEWPEGNDSVGSAAMRIDLSRIGGT) is disordered. The span at 160 to 171 (EVLRSDDRDSHT) shows a compositional bias: basic and acidic residues.

It to A.tumefaciens Ti plasmid conjugal transfer region I ORFR2 and ORFR3.

This is an uncharacterized protein from Sinorhizobium fredii (strain NBRC 101917 / NGR234).